The chain runs to 530 residues: Ubiquitin carboxyl-terminal hydrolase 17-like protein 12 (530 aa).

The USP domain occupies 80 to 375 (AGLQNMGNTC…QAYVLFYIQK (296 aa)). Cysteine 89 (nucleophile) is an active-site residue. Histidine 334 acts as the Proton acceptor in catalysis. Basic and acidic residues-rich tracts occupy residues 382–392 (SESVSRGREPR) and 398–412 (DTDR…KRDH). Disordered regions lie at residues 382–412 (SESV…KRDH) and 477–530 (NHHP…LVCQ). Residues 484–495 (SSLLKLSSTTPT) are compositionally biased toward low complexity. Residues 496 to 505 (HQESMNTGTL) show a composition bias toward polar residues. The span at 510–524 (GRARRSKGKNKHSKR) shows a compositional bias: basic residues.

The protein belongs to the peptidase C19 family. USP17 subfamily.

The protein resides in the nucleus. It localises to the endoplasmic reticulum. The enzyme catalyses Thiol-dependent hydrolysis of ester, thioester, amide, peptide and isopeptide bonds formed by the C-terminal Gly of ubiquitin (a 76-residue protein attached to proteins as an intracellular targeting signal).. Functionally, deubiquitinating enzyme that removes conjugated ubiquitin from specific proteins to regulate different cellular processes that may include cell proliferation, progression through the cell cycle, apoptosis, cell migration, and the cellular response to viral infection. The polypeptide is Ubiquitin carboxyl-terminal hydrolase 17-like protein 12 (USP17L12) (Homo sapiens (Human)).